The primary structure comprises 1250 residues: SRC kinase signaling inhibitor 1 (1250 aa).

The span at 19-45 (AEGRARSPREEVGPRDPGGRGEPDPER) shows a compositional bias: basic and acidic residues. The tract at residues 19–78 (AEGRARSPREEVGPRDPGGRGEPDPERSSPPMLSADDAEYPREYRTLGGGGGGGSGGRRF) is disordered. A phosphoserine mark is found at serine 47 and serine 52. The span at 65 to 75 (LGGGGGGGSGG) shows a compositional bias: gly residues. At serine 79 the chain carries Phosphoserine. Threonine 86 bears the Phosphothreonine mark. Phosphoserine is present on residues serine 87, serine 98, serine 211, serine 233, serine 237, serine 247, and serine 293. Position 309 is a phosphotyrosine (tyrosine 309). The tract at residues 352 to 448 (ASRESSPTRR…RRDVKPDEDL (97 aa)) is disordered. Positions 354–364 (RESSPTRRLNN) are enriched in polar residues. Over residues 365-374 (LSPASHLASS) the composition is skewed to low complexity. Residues serine 366, serine 375, and serine 392 each carry the phosphoserine modification. Low complexity predominate over residues 381–399 (PSGLPSGLPSGSPSRSRLS). Omega-N-methylarginine occurs at positions 397 and 404. 3 positions are modified to phosphoserine: serine 411, serine 430, and serine 432. Positions 437 to 448 (LERRDVKPDEDL) are enriched in basic and acidic residues. The residue at position 464 (tyrosine 464) is a Phosphotyrosine. The segment at 538–710 (PSSPQKLADV…ASSTPAGQPT (173 aa)) is disordered. Positions 552 to 563 (GGPPPPHSPYSG) are enriched in pro residues. Serine 559, serine 562, and serine 566 each carry phosphoserine. Position 567 is an omega-N-methylarginine (arginine 567). Phosphoserine occurs at positions 569, 579, 581, 583, and 588. The segment covering 590–607 (GGKARSTGSASTAGAPPS) has biased composition (low complexity). The span at 628 to 640 (KDTETRERMEAME) shows a compositional bias: basic and acidic residues. A phosphoserine mark is found at serine 664 and serine 688. 2 positions are modified to phosphothreonine: threonine 691 and threonine 704. The segment covering 701 to 710 (ASSTPAGQPT) has biased composition (low complexity). 2 coiled-coil regions span residues 712 to 753 (VSRL…RALL) and 793 to 813 (EELITQQLNDLEKSVEKIQRD). Positions 714-764 (RLQMQLHLRGLQNSASDLRGQLQQLRNVQLQNQESVRALLKPTEADVSMRV) are interaction with SNAP25. 2 positions are modified to phosphoserine: serine 911 and serine 933. 2 disordered regions span residues 924 to 982 (GLDF…ERDW) and 1016 to 1094 (DCAS…TGEV). Threonine 951 carries the post-translational modification Phosphothreonine. Serine 1054 carries the post-translational modification Phosphoserine. Over residues 1069 to 1078 (KSPPPPPPRR) the composition is skewed to pro residues. Phosphoserine occurs at positions 1110 and 1127. A disordered region spans residues 1155-1250 (ELESGGSSVP…FGARNSSISF (96 aa)). The segment covering 1217 to 1250 (PNETSSPGSEKPSGSRTSIPVLTSFGARNSSISF) has biased composition (polar residues).

Belongs to the SRCIN1 family. As to quaternary structure, interacts with the N-terminal coiled-coil region of SNAP25. Interacts with BCAR1/p130Cas and SRC through its C-terminal domain. Interacts with CSK, CTTN, SORBS3/vinexin, SYP and MAPRE3/EB3. Post-translationally, tyrosine-phosphorylated in response to EGF and to cell adhesion to integrin ligands. In terms of tissue distribution, expressed predominantly in central nervous system with high levels detected in cortex, cerebellum, midbrain and spinal cord (at protein level). Also expressed in testis and epithelial-rich tissues such as mammary gland, lung and kidney.

It localises to the cytoplasm. It is found in the cytoskeleton. The protein localises to the cell projection. The protein resides in the axon. Its subcellular location is the dendrite. It localises to the presynapse. It is found in the postsynapse. The protein localises to the postsynaptic density. In terms of biological role, acts as a negative regulator of SRC by activating CSK which inhibits SRC activity and downstream signaling, leading to impaired cell spreading and migration. Regulates dendritic spine morphology. Involved in calcium-dependent exocytosis. May play a role in neurotransmitter release or synapse maintenance. The protein is SRC kinase signaling inhibitor 1 (Srcin1) of Mus musculus (Mouse).